Here is a 130-residue protein sequence, read N- to C-terminus: Small ribosomal subunit protein uS8 (130 aa).

The protein belongs to the universal ribosomal protein uS8 family. As to quaternary structure, part of the 30S ribosomal subunit. Contacts proteins S5 and S12.

Its function is as follows. One of the primary rRNA binding proteins, it binds directly to 16S rRNA central domain where it helps coordinate assembly of the platform of the 30S subunit. The chain is Small ribosomal subunit protein uS8 from Pseudomonas fluorescens (strain ATCC BAA-477 / NRRL B-23932 / Pf-5).